Consider the following 1186-residue polypeptide: MYND-type zinc finger-containing chromatin reader ZMYND8 (1186 aa).

The segment covering 1–12 has biased composition (basic and acidic residues); that stretch reads MDISTRSKDPGS. The tract at residues 1 to 57 is disordered; that stretch reads MDISTRSKDPGSAERTAQKRKFPSPPHSSNGHSPQDTSTSPIKKKKKPGLLNSNNKE. Residues 1–850 are required for interaction with CCNT1; that stretch reads MDISTRSKDP…QQQQQQQNQQ (850 aa). Residue S12 forms a Glycyl lysine isopeptide (Lys-Gly) (interchain with G-Cter in SUMO2) linkage. S24 is subject to Phosphoserine. Glycyl lysine isopeptide (Lys-Gly) (interchain with G-Cter in SUMO2) cross-links involve residues K56 and K70. The tract at residues 75–268 is interaction with histone H3K4me0; the sequence is TDPVDVVPQD…YLAACQKRDN (194 aa). The interaction with histone H3K14ac stretch occupies residues 75–406; it reads TDPVDVVPQD…VKLNFDMTAS (332 aa). Residues 88–133 form a PHD-type zinc finger; that stretch reads DFYCWVCHREGQVLCCELCPRVYHAKCLRLTSEPEGDWFCPECEKI. The tract at residues 88–327 is required for interaction with histone H3 and histone H4; that stretch reads DFYCWVCHRE…INNCYLMSKE (240 aa). C91, C94, C103, C106, H111, C114, C127, and C130 together coordinate Zn(2+). The Bromo domain occupies 145 to 252; that stretch reads AMTMLTIEQL…KICEHEMNEI (108 aa). Residues C255, C258, and C274 each contribute to the Zn(2+) site. One can recognise a PWWP domain in the interval 277 to 327; that stretch reads PHPLVWAKLKGFPFWPAKALRDKDGQVDARFFGQHDRAWVPINNCYLMSKE. K390 participates in a covalent cross-link: Glycyl lysine isopeptide (Lys-Gly) (interchain with G-Cter in SUMO2). T404 bears the Phosphothreonine mark. The residue at position 406 (S406) is a Phosphoserine. The segment at 412-512 is disordered; it reads SKPVLSGGTG…TTKTDKTSTT (101 aa). N6-acetyllysine; alternate is present on K413. A Glycyl lysine isopeptide (Lys-Gly) (interchain with G-Cter in SUMO2); alternate cross-link involves residue K413. Phosphoserine is present on residues S417, S425, and S432. Polar residues predominate over residues 433 to 442; that stretch reads PMSTNSSVHT. S444 is subject to Phosphoserine. Residue K453 forms a Glycyl lysine isopeptide (Lys-Gly) (interchain with G-Cter in SUMO2) linkage. A phosphoserine mark is found at S460, S462, S465, S486, S490, and S495. A compositionally biased stretch (polar residues) spans 472-489; sequence STASPASTKTGQAGSLSG. A Glycyl lysine isopeptide (Lys-Gly) (interchain with G-Cter in SUMO2) cross-link involves residue K505. Phosphoserine is present on residues S514 and S523. Residue K530 forms a Glycyl lysine isopeptide (Lys-Gly) (interchain with G-Cter in SUMO2) linkage. T541 carries the post-translational modification Phosphothreonine. S547 carries the post-translational modification Phosphoserine. Residue K549 forms a Glycyl lysine isopeptide (Lys-Gly) (interchain with G-Cter in SUMO2) linkage. T563 carries the post-translational modification Phosphothreonine. Residues 582–884 are disordered; the sequence is TAVEHSDSED…ITQSPSTSTI (303 aa). 2 stretches are compositionally biased toward basic and acidic residues: residues 585 to 597 and 606 to 631; these read EHSDSEDSEKSDS and DEQKSKNEPEDTEDKEGCQMDKEPSA. Residues K611 and K645 each participate in a glycyl lysine isopeptide (Lys-Gly) (interchain with G-Cter in SUMO2) cross-link. Residues S652 and S655 each carry the phosphoserine modification. Residues 656 to 696 show a composition bias toward basic and acidic residues; that stretch reads EKADPGAVKDKASPEPEKDFSEKAKPSPHPIKDKLKGKDET. K657 participates in a covalent cross-link: Glycyl lysine isopeptide (Lys-Gly) (interchain with G-Cter in SUMO2). Phosphoserine occurs at positions 668, 682, 707, 709, and 737. Residues 718–738 are compositionally biased toward basic and acidic residues; that stretch reads GEDHSGREGRKNKKEPKEPSP. T746 carries the phosphothreonine modification. Residues S754 and S756 each carry the phosphoserine modification. The segment covering 766–799 has biased composition (low complexity); the sequence is SSAQTSAAGATATTSTSSTVTVTAPAPAATGSPV. Positions 818-832 are enriched in polar residues; it reads VWNSSSKFQTSSQKW. The segment covering 835–857 has biased composition (low complexity); it reads QKMQRQQQQQQQQNQQQQPQSSQ. Residues 873 to 884 show a composition bias toward polar residues; that stretch reads KEITQSPSTSTI. Residues 875 to 1047 form a required for homodimerization region; the sequence is ITQSPSTSTI…YCCWNTSYCD (173 aa). Positions 1028, 1031, 1039, 1040, 1046, 1050, 1058, and 1062 each coordinate Zn(2+). The segment at 1028-1062 adopts an MYND-type zinc-finger fold; the sequence is CANCKKEAIFYCCWNTSYCDYPCQQAHWPEHMKSC. Residues 1028–1062 form a required for recruitment to DNA damage sites and for interaction with the NuRD complex, CHD4, HDAC1, HDAC2 and KDM1A region; that stretch reads CANCKKEAIFYCCWNTSYCDYPCQQAHWPEHMKSC. Residues 1071 to 1186 form a disordered region; the sequence is QEADAEVNTE…KESRLDTFWD (116 aa). Residues 1085–1103 are compositionally biased toward low complexity; sequence SSQGSSSSTQSAPSETASA. Basic and acidic residues predominate over residues 1104–1116; sequence SKEKETSAEKSKE. A Glycyl lysine isopeptide (Lys-Gly) (interchain with G-Cter in SUMO2) cross-link involves residue K1115. The residue at position 1119 (S1119) is a Phosphoserine. A compositionally biased stretch (polar residues) spans 1121 to 1140; that stretch reads LDLSGSRETPSSILLGSNQG. A Phosphoserine modification is found at S1141. Positions 1147 to 1186 are interaction with PRKCB1; the sequence is NKSSWSSSDEKRGSTRSDHNTSTSTKSLLPKESRLDTFWD. 2 stretches are compositionally biased toward basic and acidic residues: residues 1154–1165 and 1175–1186; these read SDEKRGSTRSDH and LPKESRLDTFWD.

Monomer and homodimer. Interacts with NuRD subcomplexes containing GATAD2A. Interacts with the histone deacetylase NuRD complex subunit CHD4; the interaction is direct, appears to occur with monomeric ZMYND8, and is increased following DNA damage. Interacts (via N-terminus) with the P-TEFb complex subunit CCNT1 (via central region); the interaction is direct and the association appears to occur between homodimeric ZMYND8 and the activated form of the P-TEFb complex. Interacts (via N-terminus) with DBN1 (via ADF-H domain); the interaction leads to sequestering of ZMYND8 in the cytoplasm. Interacts with the P-TEFb complex subunit CDK9; the association appears to occur between homodimeric ZMYND8 and the activated form of the P-TEFb complex. Interacts with EZH2; the interaction is dependent on the presence of chromatin. Interacts (via MYND domain) with the NuRD complex subunit GATAD2A. Interacts with histone H3 (via N-terminus) that is both methylated at 'Lys-4' (H3K4me1) and acetylated at 'Lys-14' (H3K14ac), with histone H3 (via N-terminus) unmodified at 'Lys-4' (H3K4me0) and acetylated at 'Lys-14' (H3K14ac), and with histone H3 (via N-terminus) di-methylated at 'Lys-36' (H3K36me2). Interacts (via Bromo domain) with histone H4 acetylated at 'Lys-16' (H4K16ac). Interacts with HDAC1. Interacts with HDAC2. Interacts with KDM1A. Interacts with KDM5C. Interacts with KDM5D. Interacts in vitro with PRKCB. Interacts with RNA polymerase II subunit POLR2A phosphorylated at 'Ser-5'. Interacts with ZNF592. Interacts with ZNF687. Does not interact with GATAD2B. Expressed in neurons (at protein level). Absent in astrocytes (at protein level). Expressed in all tissues examined with highest expression in brain, lung, pancreas, and placenta. Expressed in cutaneous T-cell lymphomas (CTCL).

The protein resides in the nucleus. Its subcellular location is the chromosome. It is found in the cytoplasm. Its function is as follows. Chromatin reader that recognizes dual histone modifications such as histone H3.1 dimethylated at 'Lys-36' and histone H4 acetylated at 'Lys-16' (H3.1K36me2-H4K16ac) and histone H3 methylated at 'Lys-4' and histone H4 acetylated at 'Lys-14' (H3K4me1-H3K14ac). May act as a transcriptional corepressor for KDM5D by recognizing the dual histone signature H3K4me1-H3K14ac. May also act as a transcriptional corepressor for KDM5C and EZH2. Recognizes acetylated histone H4 and recruits the NuRD chromatin remodeling complex to damaged chromatin for transcriptional repression and double-strand break repair by homologous recombination. Also activates transcription elongation by RNA polymerase II through recruiting the P-TEFb complex to target promoters. Localizes to H3.1K36me2-H4K16ac marks at all-trans-retinoic acid (ATRA)-responsive genes and positively regulates their expression. Promotes neuronal differentiation by associating with regulatory regions within the MAPT gene, to enhance transcription of a protein-coding MAPT isoform and suppress the non-coding MAPT213 isoform. Suppresses breast cancer, and prostate cancer cell invasion and metastasis. In Homo sapiens (Human), this protein is MYND-type zinc finger-containing chromatin reader ZMYND8 (ZMYND8).